The following is a 509-amino-acid chain: Monocarboxylate transporter 9 (509 aa).

Residues 1 to 12 (MELKKSPDGGWG) are Cytoplasmic-facing. Helical transmembrane passes span 13-33 (WVIVFVSFFTQFLCYGSPLAV), 53-73 (WVGSLASGVGLLASPVCSLCV), 80-100 (PVTIFSGFMVAGGLMLSSFAP), 102-122 (IYFLFFSYGIVVGLGCGLLYT), 137-157 (GLALGLISTGSSVGLFIYAAL), 164-184 (FYGLDGCLLIVGALALNILAC), 305-325 (VFSALFIAILLFDIGGFPPSL), 342-362 (IMPLISIIGIMTAVGKLLLGI), 372-392 (LYLYVATLIIMGLALCAIPFA), 398-418 (LALLSGILGFLTGNWSIFPYV), 433-453 (GILMFFAGLGNSLGPPIVGWF), and 462-482 (IAFYFSGFCVLLGGFILLLAA). The Cytoplasmic portion of the chain corresponds to 483–509 (LPSWDTCNKQLPKPAPTTFLYKVASNV).

Belongs to the major facilitator superfamily. Monocarboxylate porter (TC 2.A.1.13) family.

It is found in the cell membrane. The catalysed reaction is creatine(in) = creatine(out). It carries out the reaction (R)-carnitine(in) = (R)-carnitine(out). Extracellular pH-and Na(+)-sensitive low-affinity creatine transporter. Also functions as a pH-independent carnitine efflux transporter. The sequence is that of Monocarboxylate transporter 9 (SLC16A9) from Pongo abelii (Sumatran orangutan).